The primary structure comprises 173 residues: Photosystem I assembly protein Ycf3 (173 aa).

3 TPR repeats span residues 35-68 (AFVY…EEDT), 72-105 (GYIL…NPRL), and 120-153 (GEKA…APNN).

It belongs to the Ycf3 family.

It is found in the cellular thylakoid membrane. Functionally, essential for the assembly of the photosystem I (PSI) complex. May act as a chaperone-like factor to guide the assembly of the PSI subunits. The chain is Photosystem I assembly protein Ycf3 from Nostoc sp. (strain PCC 7120 / SAG 25.82 / UTEX 2576).